The chain runs to 345 residues: GTPase Obg (345 aa).

Residues 1-159 (MKFIDEAIIK…RTLRLELKLL (159 aa)) enclose the Obg domain. The segment at 127 to 148 (NARFKSSTNRAPRKTTQGKPGE) is disordered. The segment covering 130–144 (FKSSTNRAPRKTTQG) has biased composition (polar residues). The OBG-type G domain occupies 160-334 (ADVGLLGLPN…LIHAVMQYLE (175 aa)). GTP contacts are provided by residues 166–173 (GLPNAGKS), 191–195 (FTTLH), 213–216 (DIPG), 284–287 (NKTD), and 315–317 (SAL). The Mg(2+) site is built by Ser173 and Thr193.

This sequence belongs to the TRAFAC class OBG-HflX-like GTPase superfamily. OBG GTPase family. In terms of assembly, monomer. Mg(2+) serves as cofactor.

The protein localises to the cytoplasm. In terms of biological role, an essential GTPase which binds GTP, GDP and possibly (p)ppGpp with moderate affinity, with high nucleotide exchange rates and a fairly low GTP hydrolysis rate. Plays a role in control of the cell cycle, stress response, ribosome biogenesis and in those bacteria that undergo differentiation, in morphogenesis control. The polypeptide is GTPase Obg (Nitrosococcus oceani (strain ATCC 19707 / BCRC 17464 / JCM 30415 / NCIMB 11848 / C-107)).